Reading from the N-terminus, the 970-residue chain is Sodium/calcium exchanger 1 (970 aa).

Positions 1–32 (MLRLSLSPTYSLGFHLLAMMTLLISHVDHITA) are cleaved as a signal peptide. The Extracellular segment spans residues 33 to 71 (ETEMVEEGNETGECTGSYYCKKGVILPIWEPQDPSFGDK). N-linked (GlcNAc...) asparagine glycosylation is present at asparagine 41. Residues 72–92 (IARATVYFVAMVYMFLGVSII) traverse the membrane as a helical segment. Topologically, residues 93 to 133 (ADRFMSSIEVITSQEKEITIKKPNGETTKTTVRIWNETVSN) are cytoplasmic. The helical transmembrane segment at 134 to 154 (LTLMALGSSAPEILLSVIEVC) threads the bilayer. Residues 138-178 (ALGSSAPEILLSVIEVCGHNFTAGDLGPSTIVGSAAFNMFI) form an Alpha-1 repeat. Topologically, residues 155–167 (GHNFTAGDLGPST) are extracellular. N-linked (GlcNAc...) asparagine glycosylation is present at asparagine 157. The helical transmembrane segment at 168 to 188 (IVGSAAFNMFIIIALCVYVVP) threads the bilayer. The Cytoplasmic portion of the chain corresponds to 189 to 201 (DGETRKIKHLRVF). Residues 202–222 (FVTAAWSIFAYTWLYIILSVI) traverse the membrane as a helical segment. At 223 to 228 (SPGVVE) the chain is on the extracellular side. The helical transmembrane segment at 229–249 (VWEGLLTFFFFPICVVFAWVA) threads the bilayer. Topologically, residues 250-797 (DRRLLFYKYV…FVPPTEYWNG (548 aa)) are cytoplasmic. The segment at 251–270 (RRLLFYKYVYKRYRAGKQRG) is putative calmodulin-binding region. Serine 282 and serine 389 each carry phosphoserine. 2 consecutive Calx-beta domains span residues 393 to 493 (VNTE…VHLS) and 524 to 624 (ATVT…LEIG). The Ca(2+) site is built by glutamate 417, aspartate 453, aspartate 478, aspartate 479, isoleucine 481, glutamate 483, glutamate 486, aspartate 530, aspartate 531, aspartate 532, glutamate 548, aspartate 584, aspartate 610, glutamate 611, glutamate 612, and glutamate 715. A helical transmembrane segment spans residues 798-818 (WACFIVSILMIGLLTAFIGDL). The Extracellular portion of the chain corresponds to 819–821 (ASH). A helical transmembrane segment spans residues 822–842 (FGCTIGLKDSVTAVVFVALGT). One copy of the Alpha-2 repeat lies at 839-875 (ALGTSVPDTFASKVAATQDQYADASIGNVTGSNAVNV). Over 843 to 871 (SVPDTFASKVAATQDQYADASIGNVTGSN) the chain is Cytoplasmic. A helical membrane pass occupies residues 872 to 892 (AVNVFLGIGVAWSIAAIYHAA). At 893–903 (NGEQFKVSPGT) the chain is on the extracellular side. The helical transmembrane segment at 904–924 (LAFSVTLFTIFAFINVGVLLY) threads the bilayer. Topologically, residues 925–941 (RRRPEIGGELGGPRTAK) are cytoplasmic. A helical membrane pass occupies residues 942 to 962 (LLTSCLFVLLWLLYIFFSSLE). Over 963-970 (AYCHIKGF) the chain is Extracellular.

The protein belongs to the Ca(2+):cation antiporter (CaCA) (TC 2.A.19) family. SLC8 subfamily.

It is found in the cell membrane. It catalyses the reaction Ca(2+)(in) + 3 Na(+)(out) = Ca(2+)(out) + 3 Na(+)(in). Its activity is regulated as follows. Activated by micromolar levels of Ca(2+). In terms of biological role, mediates the exchange of one Ca(2+) ion against three to four Na(+) ions across the cell membrane, and thereby contributes to the regulation of cytoplasmic Ca(2+) levels and Ca(2+)-dependent cellular processes. Contributes to Ca(2+) transport during excitation-contraction coupling in muscle. In a first phase, voltage-gated channels mediate the rapid increase of cytoplasmic Ca(2+) levels due to release of Ca(2+) stores from the endoplasmic reticulum. SLC8A1 mediates the export of Ca(2+) from the cell during the next phase, so that cytoplasmic Ca(2+) levels rapidly return to baseline. Required for normal embryonic heart development and the onset of heart contractions. The protein is Sodium/calcium exchanger 1 (SLC8A1) of Cavia porcellus (Guinea pig).